A 219-amino-acid polypeptide reads, in one-letter code: Interleukin-6 (219 aa).

A signal peptide spans 1 to 20 (MNSSTRYLSLLSALVVLVKG). An intrachain disulfide couples C103 to C111.

This sequence belongs to the IL-6 superfamily. As to quaternary structure, component of a hexamer of two molecules each of IL6, IL6R and IL6ST; first binds to IL6R to associate with the signaling subunit IL6ST. In terms of tissue distribution, expressed in spleen, gill and gastrointestinal tract, ovary and brain. Highest expression in ovary.

Its subcellular location is the secreted. Cytokine with a wide variety of biological functions in immunity, tissue regeneration, and metabolism. Binds to IL6R, then the complex associates to the signaling subunit IL6ST/gp130 to trigger the intracellular IL6-signaling pathway. The interaction with the membrane-bound IL6R and IL6ST stimulates 'classic signaling', whereas the binding of IL6 and soluble IL6R to IL6ST stimulates 'trans-signaling'. Alternatively, 'cluster signaling' occurs when membrane-bound IL6:IL6R complexes on transmitter cells activate IL6ST receptors on neighboring receiver cells. The sequence is that of Interleukin-6 (il6) from Oncorhynchus mykiss (Rainbow trout).